A 146-amino-acid chain; its full sequence is Snaclec coagulation factor IX/factor X-binding protein subunit B2 (146 aa).

The signal sequence occupies residues 1 to 23 (MGRLIFVSFGLLVVFLSLSGTAA). Cystine bridges form between Cys-25–Cys-36, Cys-53–Cys-142, and Cys-119–Cys-134. The 112-residue stretch at 32 to 143 (YEGHCYKPFN…CRMMANFVCE (112 aa)) folds into the C-type lectin domain.

Belongs to the snaclec family. Heterodimer of subunits A and B2; disulfide-linked. Expressed by the venom gland.

It localises to the secreted. In terms of biological role, anticoagulant protein which binds to the gamma-carboxyglutamic acid-domain regions of factors IX (F9) and factor X (F10) in the presence of calcium with a 1 to 1 stoichiometry. The sequence is that of Snaclec coagulation factor IX/factor X-binding protein subunit B2 from Trimeresurus stejnegeri (Chinese green tree viper).